Consider the following 500-residue polypeptide: UDP-N-acetylmuramoyl-L-alanyl-D-glutamate--2,6-diaminopimelate ligase (500 aa).

Position 32 (Ser-32) interacts with UDP-N-acetyl-alpha-D-muramoyl-L-alanyl-D-glutamate. 117 to 123 (GTNGKTT) contributes to the ATP binding site. UDP-N-acetyl-alpha-D-muramoyl-L-alanyl-D-glutamate contacts are provided by residues 159 to 160 (TT), Ser-186, Gln-192, and Arg-194. Residue Lys-226 is modified to N6-carboxylysine. Residues Arg-395, 419-422 (DNPR), Gly-470, and Glu-474 each bind meso-2,6-diaminopimelate. The Meso-diaminopimelate recognition motif signature appears at 419–422 (DNPR).

It belongs to the MurCDEF family. MurE subfamily. Mg(2+) is required as a cofactor. In terms of processing, carboxylation is probably crucial for Mg(2+) binding and, consequently, for the gamma-phosphate positioning of ATP.

The protein localises to the cytoplasm. It carries out the reaction UDP-N-acetyl-alpha-D-muramoyl-L-alanyl-D-glutamate + meso-2,6-diaminopimelate + ATP = UDP-N-acetyl-alpha-D-muramoyl-L-alanyl-gamma-D-glutamyl-meso-2,6-diaminopimelate + ADP + phosphate + H(+). The protein operates within cell wall biogenesis; peptidoglycan biosynthesis. In terms of biological role, catalyzes the addition of meso-diaminopimelic acid to the nucleotide precursor UDP-N-acetylmuramoyl-L-alanyl-D-glutamate (UMAG) in the biosynthesis of bacterial cell-wall peptidoglycan. The polypeptide is UDP-N-acetylmuramoyl-L-alanyl-D-glutamate--2,6-diaminopimelate ligase (Parasynechococcus marenigrum (strain WH8102)).